The chain runs to 764 residues: 5-methyltetrahydropteroyltriglutamate--homocysteine methyltransferase (764 aa).

Residues 16–19 and K117 contribute to the 5-methyltetrahydropteroyltri-L-glutamate site; that span reads RELK. L-homocysteine-binding positions include 442–444 and E495; that span reads IGS. L-methionine is bound by residues 442–444 and E495; that span reads IGS. 5-methyltetrahydropteroyltri-L-glutamate is bound by residues 526-527 and W572; that span reads RC. D610 provides a ligand contact to L-homocysteine. D610 is an L-methionine binding site. Residue E616 coordinates 5-methyltetrahydropteroyltri-L-glutamate. Positions 652, 654, and 676 each coordinate Zn(2+). H705 functions as the Proton donor in the catalytic mechanism. Zn(2+) is bound at residue C737.

The protein belongs to the vitamin-B12 independent methionine synthase family. Requires Zn(2+) as cofactor.

The enzyme catalyses 5-methyltetrahydropteroyltri-L-glutamate + L-homocysteine = tetrahydropteroyltri-L-glutamate + L-methionine. The protein operates within amino-acid biosynthesis; L-methionine biosynthesis via de novo pathway; L-methionine from L-homocysteine (MetE route): step 1/1. Catalyzes the transfer of a methyl group from 5-methyltetrahydrofolate to homocysteine resulting in methionine formation. This is 5-methyltetrahydropteroyltriglutamate--homocysteine methyltransferase from Bordetella petrii (strain ATCC BAA-461 / DSM 12804 / CCUG 43448).